A 178-amino-acid polypeptide reads, in one-letter code: uncharacterized protein (178 aa).

The MSP domain occupies 52–177 (HIAIEDRAHQ…RRLPASFLST (126 aa)).

This is an uncharacterized protein from Caenorhabditis elegans.